The primary structure comprises 174 residues: Large ribosomal subunit protein uL13 (174 aa).

2 disordered regions span residues 1-22 (MAFPDTDVSPPRGGPSSPAKSP) and 153-174 (GETHPHSAQKPQVLKTQPLEVK).

It belongs to the universal ribosomal protein uL13 family. Part of the 50S ribosomal subunit. Contacts proteins L3 and L20.

In terms of biological role, this protein is one of the early assembly proteins of the 50S ribosomal subunit. Binds to the 23S rRNA. This chain is Large ribosomal subunit protein uL13 (rplM), found in Deinococcus radiodurans (strain ATCC 13939 / DSM 20539 / JCM 16871 / CCUG 27074 / LMG 4051 / NBRC 15346 / NCIMB 9279 / VKM B-1422 / R1).